Reading from the N-terminus, the 246-residue chain is MGRRPCCEKIGLKKGPWSAEEDRILINYISLHGHPNWRALPKLAGLLRCGKSCRLRWINYLRPDIKRGNFTPHEEDTIISLHQLLGNRWSAIAAKLPGRTDNEIKNVWHTHLKKRLHHSQDQNNKEDFVSTTAAEMPTSPQQQSSSSADISAITTLGNNNDISNSNKDSATSSEDVLAIIDESFWSEVVLMDCDISGNEKNEKKIENWEGSLDRNDKGYNHDMEFWFDHLTSSSCIIGEMSDISEF.

HTH myb-type domains follow at residues 9–61 and 62–116; these read KIGL…INYL and RPDI…KKRL. 2 consecutive DNA-binding regions (H-T-H motif) follow at residues 37–61 and 89–112; these read WRAL…INYL and WSAI…HTHL.

In terms of tissue distribution, expressed in roots and flowers. Expressed in shoot apex, axillary buds, at the basis of flowers and branching points of inflorescences.

The protein localises to the nucleus. In terms of biological role, plays a regulatory role in meristem function. Functions as component of a regulatory network controlling the establishment and/or development of the shoot system by the regulation of apical meristem function. May play a role in tolerance to boric acid. The protein is Transcription factor MYB13 of Arabidopsis thaliana (Mouse-ear cress).